The chain runs to 527 residues: Hopanoid C-2 methylase (527 aa).

In terms of domain architecture, B12-binding spans 36–148; sequence VAAFMPPQGL…AKLTHDVTRP (113 aa). The Radical SAM core domain occupies 173-408; sequence AECSKYLLGS…HDQVVAMWKD (236 aa). Positions 189, 193, and 196 each coordinate [4Fe-4S] cluster.

It belongs to the radical SAM superfamily. It depends on [4Fe-4S] cluster as a cofactor.

Its function is as follows. Required for methylation of hopanoids at the C-2 position. The sequence is that of Hopanoid C-2 methylase from Rhodopseudomonas palustris (strain TIE-1).